The following is a 518-amino-acid chain: Apolipoprotein N-acyltransferase (518 aa).

A run of 6 helical transmembrane segments spans residues 22-42, 63-83, 101-121, 134-154, 174-194, and 202-222; these read LAFI…LWII, FFHW…WVHV, ALLA…LAWF, LLFP…LTGF, IIGA…LALC, and LLIL…LSQI. Positions 234 to 484 constitute a CN hydrolase domain; the sequence is VQGNIPQSMK…TGVLSATIPL (251 aa). Residue Glu273 is the Proton acceptor of the active site. Lys343 is a catalytic residue. The active-site Nucleophile is the Cys395. A helical transmembrane segment spans residues 492–512; it reads AKIGQTPLLILCGALLLVGFI.

Belongs to the CN hydrolase family. Apolipoprotein N-acyltransferase subfamily.

It is found in the cell inner membrane. The catalysed reaction is N-terminal S-1,2-diacyl-sn-glyceryl-L-cysteinyl-[lipoprotein] + a glycerophospholipid = N-acyl-S-1,2-diacyl-sn-glyceryl-L-cysteinyl-[lipoprotein] + a 2-acyl-sn-glycero-3-phospholipid + H(+). It participates in protein modification; lipoprotein biosynthesis (N-acyl transfer). In terms of biological role, catalyzes the phospholipid dependent N-acylation of the N-terminal cysteine of apolipoprotein, the last step in lipoprotein maturation. The polypeptide is Apolipoprotein N-acyltransferase (Shewanella oneidensis (strain ATCC 700550 / JCM 31522 / CIP 106686 / LMG 19005 / NCIMB 14063 / MR-1)).